The sequence spans 428 residues: MSKTHLTEKKFSDFALHPKVIEALDNKGFSNCTPIQALTLPFTVEGRDVAGQAQTGTGKTLAFLASAFHYLLTHPAAEERQTNQPRALIMAPTRELAVQIYSDAEDLAQATGLKMGLAYGGDGYDKQLKILESGVDILIGTTGRLIDYTKQGHINLNAVQVVVLDEADRMYDLGFIKDIRWLFRRMPPVNERMNLLFSATLSYRVRELAFEQMNHAEYIEVEPLQKTGHRIREELFYPSNEEKMRLLQTLLEEEWPDRCIIFANTKHRCEDIWAHLAADGHRVGLLTGDVAQKKRLRILEEFSNGNIDILVATDVAARGLHIPLVTHVFNYDLPDDCEDYVHRIGRTGRAGESGHSISLACEEYALNLPAIEDYIQHSIPVSKYNSQALLKDLPAPKRRYRSRSGNHQRRNNLSHRNNTPRNNRKRSG.

Positions 9–37 (KKFSDFALHPKVIEALDNKGFSNCTPIQA) match the Q motif motif. The region spanning 40–219 (LPFTVEGRDV…FEQMNHAEYI (180 aa)) is the Helicase ATP-binding domain. ATP is bound at residue 53 to 60 (AQTGTGKT). Residues 165–168 (DEAD) carry the DEAD box motif. Residues 245–390 (RLLQTLLEEE…VSKYNSQALL (146 aa)) form the Helicase C-terminal domain. Residues 392–428 (DLPAPKRRYRSRSGNHQRRNNLSHRNNTPRNNRKRSG) are disordered. Residues 396 to 413 (PKRRYRSRSGNHQRRNNL) are compositionally biased toward basic residues.

This sequence belongs to the DEAD box helicase family. RhlB subfamily. As to quaternary structure, component of the RNA degradosome, which is a multiprotein complex involved in RNA processing and mRNA degradation.

It localises to the cytoplasm. The enzyme catalyses ATP + H2O = ADP + phosphate + H(+). In terms of biological role, DEAD-box RNA helicase involved in RNA degradation. Has RNA-dependent ATPase activity and unwinds double-stranded RNA. This chain is ATP-dependent RNA helicase RhlB, found in Photorhabdus laumondii subsp. laumondii (strain DSM 15139 / CIP 105565 / TT01) (Photorhabdus luminescens subsp. laumondii).